We begin with the raw amino-acid sequence, 639 residues long: MATVRLPDGKELEVGSGERLEDVARRIGPRLARDAVVARLNGRLVDLDLPVDGGGELEFVTADSPEGLYVLRHSTAHAMAQAILELYPGSKLTIGPPVDDGFYYDIEVNGRISEEDLPRIEEKMREIARRDLPVRREEVSKEEARRLYRDNPYKLELIDEIPDERVSIYRQGDFFDLCRGPHVPSTGRLGAFKLQSVAGAYWRGDENNPMLTRIYGTAWPTEKQLRAYLKRLEEARARDHRRLGRELGLFTFAPEDVGPGIPLFLPKGETLRHLMEGFVREVQTRHGYQHVWTGHLVNERLYARSGHLEHYRDAMFPPMRDGEVSYRLKPMNCPSHMTLFNSRPRSYRELPVRYAEFATLYRYEKSGELSGLTRVRSLTQDDAHVFCTEEQVQEEFARALAIIREVLDAYGFTDYRVRLSLRDPEGGKYIADEEKWGRAEGALRAALDAAGIDYEPAPGEAAFYGPKADFMARDVLGREWQLSTIQVDFIQPGRLGCEYVGEDGERHTPVLLHRAVTGTTERFMAVLIEHYAGAFPVWLSPVQAVVIPVADRHLEYARRVREELSEGGLRVEVDDSPNSMQKKIRENARQKTPYLLIVGDREEEAGTVNVRRRGEGKRQTEMGLRGFLERVRGEVAARR.

Residues 1–61 enclose the TGS domain; it reads MATVRLPDGK…DGGGELEFVT (61 aa). The catalytic stretch occupies residues 239–536; the sequence is DHRRLGRELG…LIEHYAGAFP (298 aa). Positions 333, 384, and 513 each coordinate Zn(2+).

This sequence belongs to the class-II aminoacyl-tRNA synthetase family. In terms of assembly, homodimer. Requires Zn(2+) as cofactor.

The protein localises to the cytoplasm. It carries out the reaction tRNA(Thr) + L-threonine + ATP = L-threonyl-tRNA(Thr) + AMP + diphosphate + H(+). Catalyzes the attachment of threonine to tRNA(Thr) in a two-step reaction: L-threonine is first activated by ATP to form Thr-AMP and then transferred to the acceptor end of tRNA(Thr). Also edits incorrectly charged L-seryl-tRNA(Thr). The sequence is that of Threonine--tRNA ligase from Rubrobacter xylanophilus (strain DSM 9941 / JCM 11954 / NBRC 16129 / PRD-1).